The chain runs to 196 residues: Ribonuclease HII (196 aa).

The 188-residue stretch at asparagine 9–valine 196 folds into the RNase H type-2 domain. Residues aspartate 15, glutamate 16, and aspartate 107 each coordinate a divalent metal cation.

Belongs to the RNase HII family. Mn(2+) is required as a cofactor. It depends on Mg(2+) as a cofactor.

It localises to the cytoplasm. The catalysed reaction is Endonucleolytic cleavage to 5'-phosphomonoester.. Functionally, endonuclease that specifically degrades the RNA of RNA-DNA hybrids. In Proteus mirabilis (strain HI4320), this protein is Ribonuclease HII.